A 241-amino-acid polypeptide reads, in one-letter code: Probable phosphatase Cthe_0111 (241 aa).

Residues histidine 8, histidine 10, histidine 16, histidine 41, glutamate 74, histidine 102, histidine 132, aspartate 192, and histidine 194 each coordinate Zn(2+).

This sequence belongs to the PHP family. Requires Zn(2+) as cofactor.

In Acetivibrio thermocellus (strain ATCC 27405 / DSM 1237 / JCM 9322 / NBRC 103400 / NCIMB 10682 / NRRL B-4536 / VPI 7372) (Clostridium thermocellum), this protein is Probable phosphatase Cthe_0111.